Here is a 429-residue protein sequence, read N- to C-terminus: Saccharopine dehydrogenase-like oxidoreductase (429 aa).

A2 is modified (N-acetylalanine). Residue S217 is modified to Phosphoserine.

This sequence belongs to the saccharopine dehydrogenase family.

The sequence is that of Saccharopine dehydrogenase-like oxidoreductase (SCCPDH) from Pongo abelii (Sumatran orangutan).